The following is a 1631-amino-acid chain: ABC transporter A family member 6 (1631 aa).

The next 7 membrane-spanning stretches (helical) occupy residues 25 to 45 (ICCEIVFPIVIIGVLFAILAL), 242 to 262 (SVFITAALMMFSFRLVTDVVI), 285 to 305 (SWIITSLITSLPVTLLIVVIF), 317 to 337 (GIVIITFVLYLITLLLLSFIF), 346 to 366 (FCGLLSFVIVIAINICGIFVS), 372 to 392 (VSVKLLLSIFSPIAFSNSIYI), and 416 to 436 (ILMLGIDIIIYIILIWYFEKV). The ABC transporter 1 domain maps to 491–724 (ISIRNLRKEF…FGQGYLLTCN (234 aa)). 527-534 (GPNGCGKS) serves as a coordination point for ATP. The next 7 membrane-spanning stretches (helical) occupy residues 866–886 (SFFLSIILPMALIIGSIILYK), 1047–1067 (AIIYFVFILMAGFSLMAGSFA), 1099–1119 (WDFFFAFIISILSCSILAGVI), 1127–1147 (FGSFLLCLILLSCAIIPLGYL), 1158–1178 (AVGAITAILFVFGLVFTIASL), 1198–1218 (IIDLIFSIISPIFALNRIVFI), and 1242–1262 (LGTPLIVLAGHAVLWNVWILL). The 236-residue stretch at 1309-1544 (IQFKNLHKLF…FGAGYSIDVK (236 aa)) folds into the ABC transporter 2 domain. 1347-1354 (GLNGGGKS) lines the ATP pocket.

It belongs to the ABC transporter superfamily. ABCA family.

It localises to the membrane. This is ABC transporter A family member 6 (abcA6) from Dictyostelium discoideum (Social amoeba).